Here is a 231-residue protein sequence, read N- to C-terminus: Nitrate reductase [NAD(P)H] (231 aa).

Positions 1 to 85 (PQKLGLPVGR…KGPHRHIEYT (85 aa)) constitute an FAD-binding FR-type domain. Residues 25-28 (RAYT), 42-46 (LIKIY), F47, 59-61 (LMS), and T112 each bind FAD.

Belongs to the nitrate reductase family. Homodimer. It depends on FAD as a cofactor. Requires heme as cofactor. Mo-molybdopterin is required as a cofactor.

The enzyme catalyses nitrite + NAD(+) + H2O = nitrate + NADH + H(+). It carries out the reaction nitrite + NADP(+) + H2O = nitrate + NADPH + H(+). In terms of biological role, nitrate reductase is a key enzyme involved in the first step of nitrate assimilation in plants, fungi and bacteria. In Zea mays (Maize), this protein is Nitrate reductase [NAD(P)H] (NAR).